A 210-amino-acid polypeptide reads, in one-letter code: Thymidylate kinase (210 aa).

ATP is bound at residue 10–17; that stretch reads GLEGAGKT.

Belongs to the thymidylate kinase family.

The catalysed reaction is dTMP + ATP = dTDP + ADP. Its function is as follows. Phosphorylation of dTMP to form dTDP in both de novo and salvage pathways of dTTP synthesis. This chain is Thymidylate kinase, found in Actinobacillus succinogenes (strain ATCC 55618 / DSM 22257 / CCUG 43843 / 130Z).